The primary structure comprises 815 residues: Probable inorganic carbon transporter subunit DabA (815 aa).

Residues Cys-334, Asp-336, His-507, and Cys-522 each contribute to the Zn(2+) site.

It belongs to the inorganic carbon transporter (TC 9.A.2) DabA family. Forms a complex with DabB. Zn(2+) is required as a cofactor.

It localises to the cell inner membrane. Part of an energy-coupled inorganic carbon pump. The chain is Probable inorganic carbon transporter subunit DabA from Ectopseudomonas mendocina (strain ymp) (Pseudomonas mendocina).